The chain runs to 467 residues: Cysteine--tRNA ligase (467 aa).

C28 contributes to the Zn(2+) binding site. The short motif at 30 to 40 (PTVYNYIHVGN) is the 'HIGH' region element. C212, H237, and E241 together coordinate Zn(2+). The 'KMSKS' region motif lies at 269–273 (KMSKS). K272 provides a ligand contact to ATP.

This sequence belongs to the class-I aminoacyl-tRNA synthetase family. In terms of assembly, monomer. It depends on Zn(2+) as a cofactor.

The protein resides in the cytoplasm. It catalyses the reaction tRNA(Cys) + L-cysteine + ATP = L-cysteinyl-tRNA(Cys) + AMP + diphosphate. This Oenococcus oeni (strain ATCC BAA-331 / PSU-1) protein is Cysteine--tRNA ligase.